Consider the following 149-residue polypeptide: Nucleoside diphosphate kinase (149 aa).

Positions 9, 57, 85, 91, 102, and 112 each coordinate ATP. His115 acts as the Pros-phosphohistidine intermediate in catalysis.

The protein belongs to the NDK family. Homotetramer. Mg(2+) serves as cofactor.

It localises to the cytoplasm. It catalyses the reaction a 2'-deoxyribonucleoside 5'-diphosphate + ATP = a 2'-deoxyribonucleoside 5'-triphosphate + ADP. The enzyme catalyses a ribonucleoside 5'-diphosphate + ATP = a ribonucleoside 5'-triphosphate + ADP. Major role in the synthesis of nucleoside triphosphates other than ATP. The ATP gamma phosphate is transferred to the NDP beta phosphate via a ping-pong mechanism, using a phosphorylated active-site intermediate. This chain is Nucleoside diphosphate kinase, found in Microcystis aeruginosa (strain NIES-843 / IAM M-2473).